Consider the following 289-residue polypeptide: Paired box protein 5 homolog (289 aa).

The segment at residues 29–155 (SHTGVNQLGG…SSINRIVRNK (127 aa)) is a DNA-binding region (paired). Residues 32–88 (GVNQLGGVFVNGRPLADTVRAQIVEMSQHGTRPCDISRQLKVSHGCVSKILGRYYST) form a PAI subdomain region. The RED subdomain stretch occupies residues 107-155 (RVVECIAGYKRANPTMFAWEIRQKLIEDQICGEENVPSVSSINRIVRNK). Low complexity-rich tracts occupy residues 166–179 (SVTSSAARPSSATS) and 189–198 (VQQHMQQSTS). Residues 166–198 (SVTSSAARPSSATSHHQRSPPRGVQQHMQQSTS) form a disordered region.

The protein resides in the nucleus. The protein localises to the chromosome. In terms of biological role, transcription factor. Binds to specific DNA sequence motifs in regulatory elements, for example in the genes encoding transcription factor lin-48, apoptosis regulator ced-9 and neuropeptide-like protein nlp-2. Specifies cell fate, playing an essential role in embryonic and larval development. Involved in morphogenesis of the vulva and uterus in hermaphrodites and of the rectal epithelium of the tail in males. Plays multiple roles in the development of the egg-laying system, acting in both lin-3/EGF-pathway-dependent and -independent processes. Positively regulates expression of neuropeptide-like proteins nlp-2 and nlp-7 in uvl cells in an EGF-pathway-dependent manner. Involved in negatively modulating apoptosis in germline and somatic cells, acting in partial redundancy with transcription factor pax-2, probably by directly regulating transcription of ced-9. Positively regulates transcription of lin-48 in hindgut cells and functions in the development of the hindgut. This is Paired box protein 5 homolog from Caenorhabditis elegans.